A 261-amino-acid polypeptide reads, in one-letter code: 1,6-dihydroxycyclohexa-2,4-diene-1-carboxylate dehydrogenase (261 aa).

13–37 provides a ligand contact to NAD(+); that stretch reads IVTGAAQGIGRGVALRIAQEGGCLI. Ser145 is a binding site for substrate. Residue Tyr156 is the Proton acceptor of the active site.

Belongs to the short-chain dehydrogenases/reductases (SDR) family. In terms of assembly, homodimer.

It catalyses the reaction (1R,6S)-1,6-dihydroxycyclohexa-2,4-diene-1-carboxylate + NAD(+) = catechol + CO2 + NADH. The protein operates within aromatic compound metabolism; benzoate degradation via hydroxylation; catechol from benzoate: step 2/2. Its function is as follows. Degradation of 2-hydro-1,2-dihydroxy benzoate (DHB) to catechol. The polypeptide is 1,6-dihydroxycyclohexa-2,4-diene-1-carboxylate dehydrogenase (benD) (Acinetobacter baylyi (strain ATCC 33305 / BD413 / ADP1)).